The primary structure comprises 307 residues: Recombination-associated protein RdgC (307 aa).

It belongs to the RdgC family.

Its subcellular location is the cytoplasm. The protein localises to the nucleoid. Its function is as follows. May be involved in recombination. The chain is Recombination-associated protein RdgC from Colwellia psychrerythraea (strain 34H / ATCC BAA-681) (Vibrio psychroerythus).